A 718-amino-acid chain; its full sequence is Exostosin-2 (718 aa).

At 1 to 25 (MCASVKYNIRGPALIPRMKTKHRIY) the chain is on the cytoplasmic side. Residues 26-46 (YITLFSIVLLGLIATGMFQFW) form a helical; Signal-anchor for type II membrane protein membrane-spanning segment. At 47–718 (PHSIESSGDW…LKSFPNIGSL (672 aa)) the chain is on the lumenal side. 4 disulfide bridges follow: C85–C90, C96–C151, C286–C300, and C318–C339. N-linked (GlcNAc...) asparagine glycosylation is present at N288. L461, R465, N490, and N517 together coordinate UDP. 7 residues coordinate UDP-N-acetyl-alpha-D-glucosamine: R465, N490, N517, R522, D538, D539, and D540. Positions 538 and 539 each coordinate UDP. A Mn(2+)-binding site is contributed by D540. Y582 and S584 together coordinate a protein. The cysteines at positions 626 and 676 are disulfide-linked. UDP-N-acetyl-alpha-D-glucosamine contacts are provided by E627 and D628. N-linked (GlcNAc...) asparagine glycosylation is present at N637. A protein is bound by residues K651 and K653. R673 is a UDP-N-acetyl-alpha-D-glucosamine binding site.

The protein belongs to the glycosyltransferase 47 family. In terms of assembly, part of the heparan sulfate polymerase, a dimeric complex composed of EXT1 and EXT2. Could also form homooligomeric complexes. Interacts with NDST1. Interacts with GALNT5. Requires Mn(2+) as cofactor. Post-translationally, a soluble form is generated by proteolytic processing. N-glycosylated at Asn-637.

The protein localises to the golgi apparatus membrane. It localises to the golgi apparatus. It is found in the cis-Golgi network membrane. The protein resides in the endoplasmic reticulum membrane. Its subcellular location is the secreted. The enzyme catalyses 3-O-{[(1-&gt;4)-beta-D-GlcA-(1-&gt;4)-alpha-D-GlcNAc](n)-(1-&gt;4)-beta-D-GlcA-(1-&gt;3)-beta-D-Gal-(1-&gt;3)-beta-D-Gal-(1-&gt;4)-beta-D-Xyl}-L-seryl-[protein] + UDP-N-acetyl-alpha-D-glucosamine = 3-O-{alpha-D-GlcNAc-[(1-&gt;4)-beta-D-GlcA-(1-&gt;4)-alpha-D-GlcNAc](n)-(1-&gt;4)-beta-D-GlcA-(1-&gt;3)-beta-D-Gal-(1-&gt;3)-beta-D-Gal-(1-&gt;4)-beta-D-Xyl}-L-seryl-[protein] + UDP + H(+). It participates in protein modification; protein glycosylation. Glycosyltransferase forming with EXT1 the heterodimeric heparan sulfate polymerase which catalyzes the elongation of the heparan sulfate glycan backbone. Glycan backbone extension consists in the alternating transfer of (1-&gt;4)-beta-D-GlcA and (1-&gt;4)-alpha-D-GlcNAc residues from their respective UDP-sugar donors. Both EXT1 and EXT2 are required for the full activity of the polymerase since EXT1 bears the N-acetylglucosaminyl-proteoglycan 4-beta-glucuronosyltransferase activity within the complex while EXT2 carries the glucuronosyl-N-acetylglucosaminyl-proteoglycan 4-alpha-N-acetylglucosaminyltransferase activity. Heparan sulfate proteoglycans are ubiquitous components of the extracellular matrix and play an important role in tissue homeostasis and signaling. The protein is Exostosin-2 of Bos taurus (Bovine).